We begin with the raw amino-acid sequence, 181 residues long: MKQLLDFLPLIIFFAVYKFFDIYIASGALIAATALQLVVTYALYKKLEKMHLITFAMVTVFGTLTLVFHDDAFIKWKVTIIYALFALALGVSQLLNKSILKSMLGKEMKVADKIWAHVTWYWVSFFAICGLVNIYVAFRLPLETWVNFKVFGLTALTLINTVITVFYLYKHLPEDQRKELK.

The next 5 helical transmembrane spans lie at 10–30, 50–70, 72–92, 118–138, and 148–168; these read LIIF…GALI, MHLI…VFHD, AFIK…LGVS, VTWY…YVAF, and FKVF…VFYL.

It belongs to the YciB family.

It is found in the cell inner membrane. In terms of biological role, plays a role in cell envelope biogenesis, maintenance of cell envelope integrity and membrane homeostasis. This chain is Inner membrane-spanning protein YciB, found in Shewanella sp. (strain ANA-3).